The chain runs to 232 residues: Platelet-activating factor acetylhydrolase IB subunit alpha1 (232 aa).

The disordered stretch occupies residues 1 to 20 (MSGEGENPASKPTPVQDVQG). At serine 2 the chain carries N-acetylserine. Residue serine 2 is modified to Phosphoserine. Residues serine 48, aspartate 193, and histidine 196 contribute to the active site.

This sequence belongs to the 'GDSL' lipolytic enzyme family. Platelet-activating factor acetylhydrolase IB beta/gamma subunits subfamily. In terms of assembly, forms a catalytic dimer which is either homodimer (alpha1/alpha1 homodimer) or heterodimer with PAFAH1B2 (alpha1/alpha2 heterodimer). Component of the cytosolic (PAF-AH (I)) heterotetrameric enzyme, which is composed of PAFAH1B1 (beta), PAFAH1B2 (alpha2) and PAFAH1B3 (alpha1) subunits. The catalytic activity of the enzyme resides in the alpha1 (PAFAH1B3) and alpha2 (PAFAH1B2) subunits, whereas the beta subunit (PAFAH1B1) has regulatory activity. Trimer formation is not essential for the catalytic activity. Interacts with VLDLR; this interaction may modulate the Reelin pathway.

It is found in the cytoplasm. It catalyses the reaction a 1-O-alkyl-2-acetyl-sn-glycero-3-phosphocholine + H2O = a 1-O-alkyl-sn-glycero-3-phosphocholine + acetate + H(+). The catalysed reaction is 1-O-hexadecyl-2-acetyl-sn-glycero-3-phosphocholine + H2O = 1-O-hexadecyl-sn-glycero-3-phosphocholine + acetate + H(+). It carries out the reaction 1-O-hexadecyl-2-acetyl-sn-glycero-3-phosphate + H2O = 1-O-hexadecyl-sn-glycero-3-phosphate + acetate + H(+). Beta subunit (PAFAH1B1) inhibits the acetylhydrolase activity of the alpha1/alpha1 catalytic homodimer. Its function is as follows. Alpha1 catalytic subunit of the cytosolic type I platelet-activating factor (PAF) acetylhydrolase (PAF-AH (I)) heterotetrameric enzyme that catalyzes the hydrolyze of the acetyl group at the sn-2 position of PAF and its analogs and modulates the action of PAF. The activity and substrate specificity of PAF-AH (I) are affected by its subunit composition. Both alpha1/alpha1 homodimer (PAFAH1B3/PAFAH1B3 homodimer) and alpha1/alpha2 heterodimer(PAFAH1B3/PAFAH1B2 heterodimer) hydrolyze 1-O-alkyl-2-acetyl-sn-glycero-3-phosphoric acid (AAGPA) more efficiently than PAF, but they have little hydrolytic activity towards 1-O-alkyl-2-acetyl-sn-glycero-3-phosphorylethanolamine (AAGPE). Plays an important role during the development of brain. The polypeptide is Platelet-activating factor acetylhydrolase IB subunit alpha1 (Mus musculus (Mouse)).